The primary structure comprises 264 residues: Osteopontin (264 aa).

Residues methionine 1 to alanine 16 form the signal peptide. Disordered stretches follow at residues lysine 21–serine 141 and isoleucine 166–arginine 264. Over residues serine 31–aspartate 51 the composition is skewed to basic and acidic residues. The span at serine 52–tyrosine 73 shows a compositional bias: polar residues. Residues alanine 97–valine 118 are compositionally biased toward acidic residues. 2 N-linked (GlcNAc...) asparagine glycosylation sites follow: asparagine 106 and asparagine 109. A Cell attachment site motif is present at residues arginine 132 to aspartate 134. Basic and acidic residues predominate over residues lysine 186 to serine 212. N-linked (GlcNAc...) asparagine glycans are attached at residues asparagine 204 and asparagine 242. Over residues alanine 233 to glutamate 246 the composition is skewed to polar residues. A compositionally biased stretch (basic and acidic residues) spans glutamate 252–arginine 264.

The protein belongs to the osteopontin family. Extensively phosphorylated on serine residues.

Its subcellular location is the secreted. Its function is as follows. Major non-collagenous bone protein that binds tightly to hydroxyapatite. Appears to form an integral part of the mineralized matrix. Probably important to cell-matrix interaction. Functionally, acts as a cytokine involved in enhancing production of interferon-gamma and interleukin-12 and reducing production of interleukin-10 and is essential in the pathway that leads to type I immunity. In Gallus gallus (Chicken), this protein is Osteopontin (SPP1).